The primary structure comprises 273 residues: MNWSIFEGLLSGVNKYSTAFGRIWLSLVFIFRVLVYLVTAERVWSDDHKDFDCNTRQPGCSNVCFDEFFPVSHVRLWALQLILVTCPSLLVVMHVAYREVQEKRHREAHGENSGRLYLNPGKKRGGLWWTYVCSLVFKASVDIAFLYVFHSFYPKYILPPVVKCHADPCPNIVDCFISKPSEKNIFTLFMVATAAICILLNLVELIYLVSKRCHECLAARKAQAMCTGHHPHGTTSSCKQDDLLSGDLIFLGSDSHPPLLPDRPRDHVKKTIL.

Residues 1–20 (MNWSIFEGLLSGVNKYSTAF) lie on the Cytoplasmic side of the membrane. The helical transmembrane segment at 21 to 40 (GRIWLSLVFIFRVLVYLVTA) threads the bilayer. Residues 41–75 (ERVWSDDHKDFDCNTRQPGCSNVCFDEFFPVSHVR) are Extracellular-facing. The helical transmembrane segment at 76–98 (LWALQLILVTCPSLLVVMHVAYR) threads the bilayer. At 99–126 (EVQEKRHREAHGENSGRLYLNPGKKRGG) the chain is on the cytoplasmic side. The helical transmembrane segment at 127 to 149 (LWWTYVCSLVFKASVDIAFLYVF) threads the bilayer. Residues 150 to 187 (HSFYPKYILPPVVKCHADPCPNIVDCFISKPSEKNIFT) are Extracellular-facing. The helical transmembrane segment at 188-210 (LFMVATAAICILLNLVELIYLVS) threads the bilayer. Residues 211-273 (KRCHECLAAR…PRDHVKKTIL (63 aa)) are Cytoplasmic-facing.

This sequence belongs to the connexin family. Beta-type (group I) subfamily. As to quaternary structure, a connexon is composed of a hexamer of connexins.

The protein resides in the cell membrane. The protein localises to the cell junction. It localises to the gap junction. Its function is as follows. One gap junction consists of a cluster of closely packed pairs of transmembrane channels, the connexons, through which materials of low MW diffuse from one cell to a neighboring cell. The protein is Gap junction beta-5 protein (GJB5) of Homo sapiens (Human).